Reading from the N-terminus, the 473-residue chain is Probable glycine dehydrogenase (decarboxylating) subunit 2 (473 aa).

Residues 1–40 form a disordered region; sequence MEHYEQARYAPAEGETNEPLLSENDQTTVSVDPSLPDDLT. An N6-(pyridoxal phosphate)lysine modification is found at lysine 270.

The protein belongs to the GcvP family. C-terminal subunit subfamily. The glycine cleavage system is composed of four proteins: P, T, L and H. In this organism, the P 'protein' is a heterodimer of two subunits. The cofactor is pyridoxal 5'-phosphate.

It carries out the reaction N(6)-[(R)-lipoyl]-L-lysyl-[glycine-cleavage complex H protein] + glycine + H(+) = N(6)-[(R)-S(8)-aminomethyldihydrolipoyl]-L-lysyl-[glycine-cleavage complex H protein] + CO2. In terms of biological role, the glycine cleavage system catalyzes the degradation of glycine. The P protein binds the alpha-amino group of glycine through its pyridoxal phosphate cofactor; CO(2) is released and the remaining methylamine moiety is then transferred to the lipoamide cofactor of the H protein. The sequence is that of Probable glycine dehydrogenase (decarboxylating) subunit 2 from Halobacterium salinarum (strain ATCC 700922 / JCM 11081 / NRC-1) (Halobacterium halobium).